The following is a 479-amino-acid chain: MAQHTVYFPDAFLTQMREAMPSTLSFDDFLAACQRPLRRSIRVNTLKISVADFLQLTAPYGWTLTPIPWCEEGFWIERDNEDALPLGSTAEHLSGLFYIQEASSMLPVAALFADDNAPQRVMDVAAAPGSKTTQIAARMNNEGAILANEFSASRVKVLHANISRCGISNVALTHFDGRVFGAAVPEMFDAILLDAPCSGEGVVRKDPDALKNWSPESNQEIAATQRELIDSAFHALRPGGTLVYSTCTLNQEENEAVCLWLKETYPDAVEFLPLGDLFPGANKALTEEGFLHVFPQIYDCEGFFVARLRKTQAIPALPAPKYKVGNFPFSPVKDREAGQIRQAAAGVGLNWDENLRLWQRDKELWLFPVGIEALIGKVRFSRLGIKLAETHNKGYRWQHEAVIALASPDNMNAFELTPQEAEEWYRGRDVYPQAAPVADDVLVTFQHQPIGLAKRIGSRLKNSYPRELVRDGKLFTGNA.

Residues 125 to 131 (AAAPGSK), E149, D176, and D194 each bind S-adenosyl-L-methionine. C247 acts as the Nucleophile in catalysis.

This sequence belongs to the class I-like SAM-binding methyltransferase superfamily. RsmB/NOP family.

It is found in the cytoplasm. The enzyme catalyses cytidine(1407) in 16S rRNA + S-adenosyl-L-methionine = 5-methylcytidine(1407) in 16S rRNA + S-adenosyl-L-homocysteine + H(+). Its function is as follows. Specifically methylates the cytosine at position 1407 (m5C1407) of 16S rRNA. This chain is Ribosomal RNA small subunit methyltransferase F, found in Escherichia coli (strain SE11).